A 634-amino-acid polypeptide reads, in one-letter code: 3-dehydroshikimate dehydratase (634 aa).

A divalent metal cation-binding residues include Glu-134, Asp-165, Gln-191, and Glu-239. VOC domains are found at residues 295–414 (GIEF…LVER) and 440–590 (RVDH…VFTE). Positions 443, 521, and 599 each coordinate Mg(2+).

This sequence belongs to the bacterial two-domain DSD family. In terms of assembly, homodimer. Co(2+) serves as cofactor. It depends on Ni(2+) as a cofactor. Requires Mg(2+) as cofactor. The cofactor is Mn(2+).

It catalyses the reaction 3-dehydroshikimate = 3,4-dihydroxybenzoate + H2O. Its pathway is aromatic compound metabolism; 3,4-dihydroxybenzoate biosynthesis. Catalyzes the conversion of 3-dehydroshikimate to protocatechuate (3,4-dihydroxybenzoate), a common intermediate of quinate and shikimate degradation pathways. Is required for growth on either quinate or shikimate as a sole carbon source. In Pseudomonas aeruginosa (strain ATCC 15692 / DSM 22644 / CIP 104116 / JCM 14847 / LMG 12228 / 1C / PRS 101 / PAO1), this protein is 3-dehydroshikimate dehydratase.